We begin with the raw amino-acid sequence, 178 residues long: MDLLLLLFSAIWYILPAYVANAVPCILGGGRPVDLGKNFFDGNRIIGNGVTYRGTFFGILFGIITGILQHFIVILYMDPQSVFNYGLTGYIILGFLLGTGALFGDMLGSFIKRRLKLNQGQSAPLLDQMTFIVFALIFAYPLYQQPVNLMVILLVISPIIHFSSNIIAYKLHLKKVWW.

The next 5 helical transmembrane spans lie at 3–23 (LLLL…ANAV), 56–76 (FFGI…VILY), 91–111 (IILG…GSFI), 123–143 (APLL…YPLY), and 149–169 (LMVI…IIAY).

This sequence belongs to the CDP-archaeol synthase family. The cofactor is Mg(2+).

Its subcellular location is the cell membrane. The enzyme catalyses 2,3-bis-O-(geranylgeranyl)-sn-glycerol 1-phosphate + CTP + H(+) = CDP-2,3-bis-O-(geranylgeranyl)-sn-glycerol + diphosphate. Its pathway is membrane lipid metabolism; glycerophospholipid metabolism. Catalyzes the formation of CDP-2,3-bis-(O-geranylgeranyl)-sn-glycerol (CDP-archaeol) from 2,3-bis-(O-geranylgeranyl)-sn-glycerol 1-phosphate (DGGGP) and CTP. This reaction is the third ether-bond-formation step in the biosynthesis of archaeal membrane lipids. The chain is CDP-archaeol synthase from Methanococcus maripaludis (strain C7 / ATCC BAA-1331).